Consider the following 361-residue polypeptide: Geranylgeranyl pyrophosphate synthase 3 (361 aa).

The interval 44-63 (DSNGSKELAPNGAQSRVQKP) is disordered. Isopentenyl diphosphate is bound by residues lysine 81, arginine 84, and histidine 113. Residues aspartate 120 and aspartate 124 each coordinate Mg(2+). Arginine 129 lines the dimethylallyl diphosphate pocket. Residue arginine 130 coordinates isopentenyl diphosphate. Dimethylallyl diphosphate is bound by residues lysine 207, threonine 208, and glutamine 244. Aspartate 247 contacts Mg(2+). Residues asparagine 251, lysine 261, and lysine 271 each contribute to the dimethylallyl diphosphate site.

Belongs to the FPP/GGPP synthase family. It depends on Mg(2+) as a cofactor.

The catalysed reaction is isopentenyl diphosphate + dimethylallyl diphosphate = (2E)-geranyl diphosphate + diphosphate. It catalyses the reaction isopentenyl diphosphate + (2E)-geranyl diphosphate = (2E,6E)-farnesyl diphosphate + diphosphate. It carries out the reaction isopentenyl diphosphate + (2E,6E)-farnesyl diphosphate = (2E,6E,10E)-geranylgeranyl diphosphate + diphosphate. In terms of biological role, geranylgeranyl pyrophosphate synthase; part of the gene cluster 25 that mediates the biosynthesis of an isoprenoid secondary metabolite. The polypeptide is Geranylgeranyl pyrophosphate synthase 3 (GGS3) (Zymoseptoria tritici (strain CBS 115943 / IPO323) (Speckled leaf blotch fungus)).